Here is a 544-residue protein sequence, read N- to C-terminus: Ceramide glucosyltransferase (544 aa).

The Lumenal segment spans residues 1 to 15; sequence MVQEELSLFRITTGY. A helical transmembrane segment spans residues 16-36; sequence FFLLWYIIILVAAYSGFFEIL. At 37 to 427 the chain is on the cytoplasmic side; sequence FNFRNRPILH…LATLIEPTTE (391 aa). A short sequence motif (D1) is located at residue D109. A short sequence motif (D2) is located at residue D171. D364 is a short sequence motif (D3). D364 (proton acceptor) is an active-site residue. The short motif at 404–408 is the (Q/R)XXRW element; the sequence is RRVRW. A helical membrane pass occupies residues 428-448; that stretch reads SIICGIYGTYAISTVFFGTWF. The Lumenal segment spans residues 449-451; sequence NKY. A helical transmembrane segment spans residues 452 to 472; sequence WFVMHMLIWMLTDYVQYHTLI. Residues 473–501 are Cytoplasmic-facing; it reads NHTLDVKNITYLPNWLNESIPPKQRNCLQ. A helical membrane pass occupies residues 502-522; that stretch reads WGYIWILRELLALPIWIIAMI. At 523 to 544 the chain is on the lumenal side; sequence GHEIDWRGRPFRIKKDLTAEEM.

The protein belongs to the glycosyltransferase 2 family.

Its subcellular location is the golgi apparatus membrane. It carries out the reaction an N-acylsphing-4-enine + UDP-alpha-D-glucose = a beta-D-glucosyl-(1&lt;-&gt;1')-N-acylsphing-4-enine + UDP + H(+). It participates in lipid metabolism; sphingolipid metabolism. Catalyzes the final step in the biosynthesis of the membrane lipid glucosylceramide (GluCer), the transfer of glucose to ceramide. Glucosylceramides play important roles in growth, differentiation and pathogenicity. This is Ceramide glucosyltransferase from Candida albicans (strain SC5314 / ATCC MYA-2876) (Yeast).